A 628-amino-acid chain; its full sequence is Eukaryotic peptide chain release factor GTP-binding subunit ERF3B (628 aa).

The span at 1 to 10 (MDSGSSSSDS) shows a compositional bias: low complexity. Disordered regions lie at residues 1–44 (MDSG…REPL), 71–124 (SFLR…LEGS), and 146–191 (LEES…KSKS). The tr-type G domain maps to 201–425 (KEHVNVVFIG…YLDNLPNFNR (225 aa)). The interval 210-217 (GHVDAGKS) is G1. 213 to 218 (DAGKST) provides a ligand contact to GTP. Positions 266–270 (GKTVE) are G2. The G3 stretch occupies residues 287 to 290 (DAPG). Residues 349–352 (NKMD) and 391–393 (SGL) contribute to the GTP site. The G4 stretch occupies residues 349-352 (NKMD). Residues 391-393 (SGL) form a G5 region.

The protein belongs to the TRAFAC class translation factor GTPase superfamily. Classic translation factor GTPase family. ERF3 subfamily. Component of the eRF1-eRF3-GTP ternary complex, composed of ETF1/ERF1 and ERF3 (GSPT1/ERF3A or GSPT2/ERF3B) and GTP. Component of the transient SURF (SMG1-UPF1-eRF1-eRF3) complex. Interacts with UPF1 and PABPC1.

Its subcellular location is the cytoplasm. The enzyme catalyses GTP + H2O = GDP + phosphate + H(+). In terms of biological role, GTPase component of the eRF1-eRF3-GTP ternary complex, a ternary complex that mediates translation termination in response to the termination codons UAA, UAG and UGA. GSPT2/ERF3B mediates ETF1/ERF1 delivery to stop codons: The eRF1-eRF3-GTP complex binds to a stop codon in the ribosomal A-site. GTP hydrolysis by GSPT2/ERF3B induces a conformational change that leads to its dissociation, permitting ETF1/ERF1 to accommodate fully in the A-site. Component of the transient SURF complex which recruits UPF1 to stalled ribosomes in the context of nonsense-mediated decay (NMD) of mRNAs containing premature stop codons. This is Eukaryotic peptide chain release factor GTP-binding subunit ERF3B (GSPT2) from Pongo abelii (Sumatran orangutan).